The following is a 160-amino-acid chain: Cytochrome b6-f complex subunit 4 (160 aa).

3 helical membrane-spanning segments follow: residues 36–56 (LLYI…GLAV), 95–115 (LLGV…PFLE), and 131–151 (TVFL…TLPI).

The protein belongs to the cytochrome b family. PetD subfamily. The 4 large subunits of the cytochrome b6-f complex are cytochrome b6, subunit IV (17 kDa polypeptide, petD), cytochrome f and the Rieske protein, while the 4 small subunits are petG, petL, petM and petN. The complex functions as a dimer.

Its subcellular location is the plastid. It is found in the chloroplast thylakoid membrane. In terms of biological role, component of the cytochrome b6-f complex, which mediates electron transfer between photosystem II (PSII) and photosystem I (PSI), cyclic electron flow around PSI, and state transitions. This is Cytochrome b6-f complex subunit 4 from Solanum bulbocastanum (Wild potato).